We begin with the raw amino-acid sequence, 208 residues long: Small ribosomal subunit protein uS4 (208 aa).

One can recognise an S4 RNA-binding domain in the interval 98–161 (RRLDNVIYRM…KELEIIKESL (64 aa)).

The protein belongs to the universal ribosomal protein uS4 family. Part of the 30S ribosomal subunit. Contacts protein S5. The interaction surface between S4 and S5 is involved in control of translational fidelity.

Functionally, one of the primary rRNA binding proteins, it binds directly to 16S rRNA where it nucleates assembly of the body of the 30S subunit. With S5 and S12 plays an important role in translational accuracy. The sequence is that of Small ribosomal subunit protein uS4 from Thermodesulfovibrio yellowstonii (strain ATCC 51303 / DSM 11347 / YP87).